A 210-amino-acid chain; its full sequence is Ribonuclease HII (210 aa).

The region spanning 18–208 (YPVAGIDEAG…VNDIISQTKL (191 aa)) is the RNase H type-2 domain. 3 residues coordinate a divalent metal cation: aspartate 24, glutamate 25, and aspartate 116.

Belongs to the RNase HII family. Mn(2+) serves as cofactor. It depends on Mg(2+) as a cofactor.

It localises to the cytoplasm. It catalyses the reaction Endonucleolytic cleavage to 5'-phosphomonoester.. Its function is as follows. Endonuclease that specifically degrades the RNA of RNA-DNA hybrids. This Endomicrobium trichonymphae protein is Ribonuclease HII.